The chain runs to 347 residues: Inositol 2-dehydrogenase (347 aa).

The protein belongs to the Gfo/Idh/MocA family. As to quaternary structure, homotetramer.

It carries out the reaction myo-inositol + NAD(+) = scyllo-inosose + NADH + H(+). Its function is as follows. Involved in the oxidation of myo-inositol (MI) to 2-keto-myo-inositol (2KMI or 2-inosose). The protein is Inositol 2-dehydrogenase of Rubrobacter xylanophilus (strain DSM 9941 / JCM 11954 / NBRC 16129 / PRD-1).